A 522-amino-acid polypeptide reads, in one-letter code: N-acetylgalactosamine-6-sulfatase (522 aa).

The N-terminal stretch at 1 to 25 is a signal peptide; that stretch reads MAPVAAATGWRLLLVLSAAGLGAAG. A catalytic domain region spans residues 27 to 379; sequence PQPPNILLLL…PAMLGGQLTD (353 aa). Ca(2+)-binding residues include aspartate 38, aspartate 39, and cysteine 78. Cysteine 78 (nucleophile) is an active-site residue. Residue cysteine 78 is modified to 3-oxoalanine (Cys). Residue histidine 141 is part of the active site. Asparagine 203 carries an N-linked (GlcNAc...) asparagine glycan. Ca(2+)-binding residues include aspartate 288 and asparagine 289. An intrachain disulfide couples cysteine 308 to cysteine 419. Asparagine 423 carries an N-linked (GlcNAc...) asparagine glycan. Cystine bridges form between cysteine 489–cysteine 518 and cysteine 501–cysteine 507.

It belongs to the sulfatase family. Homodimer. Ca(2+) serves as cofactor. In terms of processing, the conversion to 3-oxoalanine (also known as C-formylglycine, FGly), of a serine or cysteine residue in prokaryotes and of a cysteine residue in eukaryotes, is critical for catalytic activity.

Its subcellular location is the lysosome. The catalysed reaction is Hydrolysis of the 6-sulfate groups of the N-acetyl-D-galactosamine 6-sulfate units of chondroitin sulfate and of the D-galactose 6-sulfate units of keratan sulfate.. This Canis lupus familiaris (Dog) protein is N-acetylgalactosamine-6-sulfatase (GALNS).